The following is a 207-amino-acid chain: Holliday junction branch migration complex subunit RuvA (207 aa).

The tract at residues 1-64 (MISYIKGELA…EDECSLFGFL (64 aa)) is domain I. Positions 65–143 (TRDDLSMFKM…LDEVFESALS (79 aa)) are domain II. Residues 144–155 (KNKKADNNSNVS) are flexible linker. Residues 156–207 (NVMMIRNDAVEALVSLGYSSKDALVAVKEVEDIENKDSETVLKEALKKLVKF) are domain III.

This sequence belongs to the RuvA family. Homotetramer. Forms an RuvA(8)-RuvB(12)-Holliday junction (HJ) complex. HJ DNA is sandwiched between 2 RuvA tetramers; dsDNA enters through RuvA and exits via RuvB. An RuvB hexamer assembles on each DNA strand where it exits the tetramer. Each RuvB hexamer is contacted by two RuvA subunits (via domain III) on 2 adjacent RuvB subunits; this complex drives branch migration. In the full resolvosome a probable DNA-RuvA(4)-RuvB(12)-RuvC(2) complex forms which resolves the HJ.

The protein localises to the cytoplasm. In terms of biological role, the RuvA-RuvB-RuvC complex processes Holliday junction (HJ) DNA during genetic recombination and DNA repair, while the RuvA-RuvB complex plays an important role in the rescue of blocked DNA replication forks via replication fork reversal (RFR). RuvA specifically binds to HJ cruciform DNA, conferring on it an open structure. The RuvB hexamer acts as an ATP-dependent pump, pulling dsDNA into and through the RuvAB complex. HJ branch migration allows RuvC to scan DNA until it finds its consensus sequence, where it cleaves and resolves the cruciform DNA. In Lachnospira eligens (strain ATCC 27750 / DSM 3376 / VPI C15-48 / C15-B4) (Eubacterium eligens), this protein is Holliday junction branch migration complex subunit RuvA.